Reading from the N-terminus, the 83-residue chain is Defensin-like protein 47 (83 aa).

Residues 1–27 (MGSTKTLVTCFLVIILAVSLPNNNVLA) form the signal peptide. Cystine bridges form between C40–C81, C44–C68, C53–C79, and C57–C80.

This sequence belongs to the DEFL family.

It localises to the secreted. In Arabidopsis thaliana (Mouse-ear cress), this protein is Defensin-like protein 47.